The sequence spans 155 residues: MWSLRGLRLAAGHCFRLCERNVSSPLRLTRNTDLKRINGFCTKPQESPKAPTQSYRHRVPLHKPTDFEKKILLWSGRFKKEEEIPETISFEMLDAAKNKIRVKVSYLMIALTVAGCVYMVIEGKKAAKRHESLTSLNLERKARLREEAAMKAKAD.

The required for proapoptotic activity stretch occupies residues 77–103 (RFKKEEEIPETISFEMLDAAKNKIRVK). Residues 102-121 (VKVSYLMIALTVAGCVYMVI) form a helical membrane-spanning segment.

The protein belongs to the UPF0389 family. In terms of assembly, interacts with HSP90AB1; HSP90AB1 is essential for FAM162A mitochondrial localization and pro-apoptotic activity. Interacts with VDAC2; the interaction is probably involved in inducing mitochondrial permeability transition.

Its subcellular location is the mitochondrion membrane. Functionally, proposed to be involved in regulation of apoptosis; the exact mechanism may differ between cell types/tissues. May be involved in hypoxia-induced cell death of transformed cells implicating cytochrome C release and caspase activation (such as CASP9) and inducing mitochondrial permeability transition. May be involved in hypoxia-induced cell death of neuronal cells probably by promoting release of AIFM1 from mitochondria to cytoplasm and its translocation to the nucleus; however, the involvement of caspases has been reported conflictingly. This Rattus norvegicus (Rat) protein is Protein FAM162A (Fam162a).